Consider the following 568-residue polypeptide: Urease subunit alpha (568 aa).

The 438-residue stretch at 131-568 (GGIDTHIHFI…LPMAQRYFLF (438 aa)) folds into the Urease domain. Ni(2+) is bound by residues H136, H138, and K219. K219 carries the post-translational modification N6-carboxylysine. A substrate-binding site is contributed by H221. Residues H248 and H274 each coordinate Ni(2+). Catalysis depends on H322, which acts as the Proton donor. Residue D362 coordinates Ni(2+).

Belongs to the metallo-dependent hydrolases superfamily. Urease alpha subunit family. In terms of assembly, heterotrimer of UreA (gamma), UreB (beta) and UreC (alpha) subunits. Three heterotrimers associate to form the active enzyme. Requires Ni cation as cofactor. In terms of processing, carboxylation allows a single lysine to coordinate two nickel ions.

It is found in the cytoplasm. The enzyme catalyses urea + 2 H2O + H(+) = hydrogencarbonate + 2 NH4(+). It participates in nitrogen metabolism; urea degradation; CO(2) and NH(3) from urea (urease route): step 1/1. This Trichormus variabilis (strain ATCC 29413 / PCC 7937) (Anabaena variabilis) protein is Urease subunit alpha.